Consider the following 152-residue polypeptide: MAEAARRQGGGRPLPPPPRGVNQQPPRPKPEPVDREKTCPLLLRVFTKSGGHHTSEDYAVRGKEPKDEVQIYTWKDASLRELTDLVKEVSVAARRRNARLSFAFVYPNNKGGYNVREVGETMAYPNRKQPDDSKTLSELPFEIGDYLDVAIY.

The segment at 1 to 38 is disordered; the sequence is MAEAARRQGGGRPLPPPPRGVNQQPPRPKPEPVDREKT. The span at 28-38 shows a compositional bias: basic and acidic residues; that stretch reads PKPEPVDREKT.

It belongs to the SAP18 family. In terms of assembly, interacts with SIN3, ERF3, ERF4 and HDA19. Ubiquitous, with low level in flowers.

In terms of biological role, links the histone deacetylase complex to transcriptional repressors bound to chromatin. Involved in the tethering of the SIN3 complex to core histone proteins. In Arabidopsis thaliana (Mouse-ear cress), this protein is Histone deacetylase complex subunit SAP18.